A 432-amino-acid polypeptide reads, in one-letter code: Adenylosuccinate synthetase (432 aa).

Residues 12-18 (GDEGKGK) and 40-42 (GHT) each bind GTP. Asp13 acts as the Proton acceptor in catalysis. The Mg(2+) site is built by Asp13 and Gly40. IMP is bound by residues 13 to 16 (DEGK), 38 to 41 (NAGH), Thr132, Arg146, Gln226, Thr241, and Arg305. His41 serves as the catalytic Proton donor. Substrate is bound at residue 301-307 (VVTGRKR). Residues Arg307, 333-335 (KLD), and 415-417 (STS) each bind GTP.

This sequence belongs to the adenylosuccinate synthetase family. As to quaternary structure, homodimer. Requires Mg(2+) as cofactor.

It is found in the cytoplasm. The catalysed reaction is IMP + L-aspartate + GTP = N(6)-(1,2-dicarboxyethyl)-AMP + GDP + phosphate + 2 H(+). The protein operates within purine metabolism; AMP biosynthesis via de novo pathway; AMP from IMP: step 1/2. Its function is as follows. Plays an important role in the de novo pathway of purine nucleotide biosynthesis. Catalyzes the first committed step in the biosynthesis of AMP from IMP. The chain is Adenylosuccinate synthetase from Rhizobium etli (strain CIAT 652).